The primary structure comprises 174 residues: Probable E3 ubiquitin-protein ligase RHA4A (174 aa).

The RING-type; atypical zinc-finger motif lies at 105–147 (CCVCLGEFELKEELVEMPLCKHIFHLDCIHLWLYSHNTCPLCR). The interval 155–174 (TKTSVDDDNDHPDSPQTSPV) is disordered.

As to expression, expressed in stems, flowers, cauline leaves and roots.

It catalyses the reaction S-ubiquitinyl-[E2 ubiquitin-conjugating enzyme]-L-cysteine + [acceptor protein]-L-lysine = [E2 ubiquitin-conjugating enzyme]-L-cysteine + N(6)-ubiquitinyl-[acceptor protein]-L-lysine.. It functions in the pathway protein modification; protein ubiquitination. In terms of biological role, probable E3 ubiquitin-protein ligase that may possess E3 ubiquitin ligase activity in vitro. The sequence is that of Probable E3 ubiquitin-protein ligase RHA4A from Arabidopsis thaliana (Mouse-ear cress).